The following is a 1179-amino-acid chain: Integrin alpha-7 (1179 aa).

Residues 1-33 (MARIPRCDFLRPPGIYYLITSLLAGLFLPPAIA) form the signal peptide. At 34–1076 (FNLDVMGAIR…YLDPMAVVVE (1043 aa)) the chain is on the extracellular side. 7 FG-GAP repeats span residues 38–103 (VMGA…ETDC), 110–175 (RGAN…IRDE), 185–238 (EGRP…SPDL), 292–349 (DRLT…ATRL), 350–411 (IPEV…HWAD), 412–467 (ISPL…GVVV), and 471–530 (QVLE…IDPR). A glycan (N-linked (GlcNAc...) asparagine) is linked at Asn-86. 3 cysteine pairs are disulfide-bonded: Cys-94–Cys-103, Cys-140–Cys-163, and Cys-184–Cys-197. Residues Asp-372, Asn-374, Asp-376, Asp-380, Asp-434, Asn-436, Asp-438, Asp-442, Asp-492, Asp-494, Asn-496, Tyr-498, and Asp-500 each contribute to the Ca(2+) site. 6 cysteine pairs are disulfide-bonded: Cys-539–Cys-546, Cys-552–Cys-615, Cys-681–Cys-687, Cys-781–Cys-792, Cys-939–Cys-993, and Cys-999–Cys-1004. An N-linked (GlcNAc...) asparagine glycan is attached at Asn-784. Basic and acidic residues predominate over residues 952 to 961 (SRDRRRRELG). A disordered region spans residues 952-978 (SRDRRRRELGQPEPQEPPEKVEPSTSW). A glycan (N-linked (GlcNAc...) asparagine) is linked at Asn-988. N-linked (GlcNAc...) asparagine glycans are attached at residues Asn-1023 and Asn-1043. Residues 1077–1102 (GVPWWVILLGVLAGLLVLALLVLLLW) traverse the membrane as a helical segment. At 1103-1179 (KLGFFKRAKH…PDGHPVPATA (77 aa)) the chain is on the cytoplasmic side. The short motif at 1105–1109 (GFFKR) is the GFFKR motif element. The interval 1134–1153 (KEEKTGTIQRSNWGNSQWEG) is disordered. Residues 1139-1152 (GTIQRSNWGNSQWE) are compositionally biased toward polar residues. Tandem repeats lie at residues 1155–1158 (DAHP), 1163–1166 (DWHP), and 1171–1174 (DGHP). Positions 1155-1174 (DAHPILAADWHPELGPDGHP) are 3 X 4 AA repeats of D-X-H-P.

The protein belongs to the integrin alpha chain family. In terms of assembly, heterodimer of an alpha and a beta subunit. The alpha subunit is composed of a heavy and a light chain linked by a disulfide bond. Alpha-7 associates with beta-1. Interacts with COMP. Interacts (via C-terminus intracellular tail region) with CIB1; the interaction is stabilized/increased in a calcium- and magnesium-dependent manner. In terms of processing, ADP-ribosylated on at least two sites of the extracellular domain in skeletal myotubes (in vitro). No proteolytic cleavage to produce the 70 kDa form is seen due to the presence of a Gly instead of an arginine residue at position 647. Isoforms containing segment X2 are found in adult heart, lung and skeletal muscle. Isoforms containing segment X1 are expressed in adult heart, lung and in proliferating skeletal myoblasts but not in adult skeletal muscle. Isoforms containing segment a are exclusively found in skeletal muscle. Isoforms containing segment B are widely expressed. In muscle fibers isoforms containing segment A and B are expressed at myotendinous and neuromuscular junctions; isoforms containing segment C are expressed at neuromuscular junctions and at extrasynaptic sites.

Its subcellular location is the membrane. Functionally, integrin alpha-7/beta-1 is the primary laminin receptor on skeletal myoblasts and adult myofibers. During myogenic differentiation, it may induce changes in the shape and mobility of myoblasts, and facilitate their localization at laminin-rich sites of secondary fiber formation. Involved in the maintenance of the myofibers cytoarchitecture as well as for their anchorage, viability and functional integrity. Mice carrying a ITGA7 null allele are viable and fertile, but show progressive muscular dystrophy starting soon after birth, but with a distinct variability in different muscle types. Required to promote contractile phenotype acquisition in differentiated airway smooth muscle (ASM) cells. Acts as a Schwann cell receptor for laminin-2. Acts as a receptor of COMP and mediates its effect on vascular smooth muscle cells (VSMCs) maturation. In Mus musculus (Mouse), this protein is Integrin alpha-7 (Itga7).